The chain runs to 379 residues: Chaperone protein DnaJ (379 aa).

The J domain occupies 5-69 (EYYERLGVDK…QKRAAYDQYG (65 aa)). The CR-type zinc finger occupies 141–223 (GVEKQVKYNR…CHGSGHEKVA (83 aa)). Zn(2+) contacts are provided by Cys154, Cys157, Cys171, Cys174, Cys197, Cys200, Cys211, and Cys214. CXXCXGXG motif repeat units lie at residues 154–161 (CHTCGGSG), 171–178 (CHKCGGRG), 197–204 (CDVCHGTG), and 211–218 (CTTCHGSG).

This sequence belongs to the DnaJ family. Homodimer. The cofactor is Zn(2+).

It is found in the cytoplasm. Participates actively in the response to hyperosmotic and heat shock by preventing the aggregation of stress-denatured proteins and by disaggregating proteins, also in an autonomous, DnaK-independent fashion. Unfolded proteins bind initially to DnaJ; upon interaction with the DnaJ-bound protein, DnaK hydrolyzes its bound ATP, resulting in the formation of a stable complex. GrpE releases ADP from DnaK; ATP binding to DnaK triggers the release of the substrate protein, thus completing the reaction cycle. Several rounds of ATP-dependent interactions between DnaJ, DnaK and GrpE are required for fully efficient folding. Also involved, together with DnaK and GrpE, in the DNA replication of plasmids through activation of initiation proteins. This Lactococcus lactis subsp. cremoris (strain MG1363) protein is Chaperone protein DnaJ.